Reading from the N-terminus, the 219-residue chain is MSDLANTAERRGEKRPAGGNRRGNRLPRDERRGQLLIAASEVFVDRGYHAAGMDEIADRAGVSKPVLYQHFSSKLELYLAVLQRHVDNLVSGVRQALRTTTDNRQRLRAAVEAFFDFIEHDSQGYRLIFENDYVTEPQVAAQVKVATEACTDAVFDLISRDSGLEAHRARMIAVGLVAISVDSARYWLNNDRPIDKDSAVEGTVQFAWGGLSHVPLTRS.

Positions 1 to 30 are disordered; it reads MSDLANTAERRGEKRPAGGNRRGNRLPRDE. One can recognise an HTH tetR-type domain in the interval 29-89; it reads DERRGQLLIA…AVLQRHVDNL (61 aa). A DNA-binding region (H-T-H motif) is located at residues 52–71; it reads GMDEIADRAGVSKPVLYQHF.

Homodimer.

Its activity is regulated as follows. FasR:DNA binding is regulated by long-chain acyl-CoAs (C14- to C26-CoA), which act as effector molecules that modulate the affinity of FasR for its DNA binding sequences and therefore modulate the expression of the essential fas-acpS operon. Its function is as follows. Transcriptional activator that plays a central role in sensing mycobacterial long-chain fatty acids and regulating lipid biosynthesis. Activates the expression of the genes encoding the fatty acid synthase (fas) and the 4-phosphopantetheinyl transferase (acpS), whose products are involved in the fatty acid and mycolic acid biosynthesis. Specifically binds to three conserved operator sequences present in the fas-acpS promoter region. Essential for M.smegmatis viability. This chain is HTH-type transcriptional activator FasR, found in Mycolicibacterium smegmatis (strain ATCC 700084 / mc(2)155) (Mycobacterium smegmatis).